Reading from the N-terminus, the 162-residue chain is Calcium-binding protein 4b (162 aa).

4 consecutive EF-hand domains span residues 10–45, 46–81, 85–120, and 123–158; these read ELTNATNEAIKAADKNGDNQLSKKEVNDMYKKCKYP, NPTLATNSLFELFDLDKDGKLSVNEVKTAVLVDYII, TCLKKFVDIIFKADSNKDNKITWDEARQYFITSGSN, and QAKVLANSMFEDVDSDDDKCITREELREYAIEYFEI. Positions 23, 25, 27, 29, 34, 59, 61, 63, 65, and 70 each coordinate Ca(2+). Residues Asp136, Asp138, Asp140, Cys142, and Glu147 each coordinate Ca(2+).

In Dictyostelium discoideum (Social amoeba), this protein is Calcium-binding protein 4b (cbpD2).